A 578-amino-acid polypeptide reads, in one-letter code: MGEPSPSRRRSITSGIPCPSPTKQVLPPPPPEELHNILRKRPRSSAIPTTSQTHVRAPRKETDVVDRIWHDIDEEQREKLARRKEEAAKRKEQQPAQHIRDYLPLTATNLRNFRNEDSTISDFIHRQGMVDKLLGYKMLLGKMENCGTLGYEKMSEDEVQQLSREWLKNFFPSEQAHVGPRTPPSPAVDSDGGSYPKRPRRGPKTPPGSPGPSMDQAAVNRRELIEQLARNFGISSYKVEETLGTGLDKALEDCSKKLKNELMETFKDQLLSQIDRKTKIRDDLSDQMELVSDCSLSPDLIKKEEPDVVYHMAVPPPPIPPPIQPPPYSYYPVAPAAAPQVYHYAPPPPPPPPHPQQGLYQQNMMAYPPPMQHFNAPPPPMAPYQHQAPPSIVLPPVNVPPPPIGVRIDTPIPTAVLPIPTMVPPPPLPPPQAPFSGDCWRAQPAAPVPASVPVSSAPPPSVVVNVQSTLFSALGLHHKPPPPPPPPPPPTTSSTTTSHIPPPPPPPLPFSSAPPPPPPLPMVAAGPSPPSFVPPPPPPNPNQNPSIVLSPSAVTGGGGYRHRVNQFPPQQQQSFSNF.

Disordered stretches follow at residues 1–62, 173–216, 426–457, and 474–578; these read MGEP…RKET, SEQA…SMDQ, PPLPPPQAPFSGDCWRAQPAAPVPASVPVSSA, and LGLH…FSNF. A compositionally biased stretch (low complexity) spans 444–455; that stretch reads PAAPVPASVPVS. Composition is skewed to pro residues over residues 481–491 and 500–542; these read PPPPPPPPPPT and IPPP…PNPN. Positions 565–578 are enriched in low complexity; it reads NQFPPQQQQSFSNF.

As to quaternary structure, may interact (via C-terminus) with ssup-72; the interaction may prevent ssup-72 binding to RNA polymerase II subunit ama-1. As to expression, expressed in germline, oocytes, epidermis, pharyngeal bulb and neurons.

It is found in the nucleus. Its subcellular location is the nucleus speckle. In terms of biological role, acts as a negative regulator of nuclear pre-mRNA 3'-end processing (mRNA polyadenylation). Plays a role in tissue-specific expression of protein isoforms by regulating differential processing of pre-mRNA 3'-end (alternative polyadenylation). In neurons, regulates alternative polyadenylation of specific mRNAs including unc-44 and dlk-1 by interacting with phosphatase ssup-72 and thus preventing ssup-72 dephosphorylation of RNA polymerase II subunit ama-1. Specifically, alters the usage of internal polyadenylation sites (PAS) to promote the production of neuron-specific unc-44 isoform and dlk-1 isoform c, both required for normal synapse and axon development. Conversely, in the epidermis, by inhibiting ssup-72 function, promotes the usage of an internal PAS preventing the production of one of unc-44 isoforms. In neurons, also negatively regulates protein levels of pre-RNA processing protein psf-2. This Caenorhabditis elegans protein is Synaptic defective enhancer 1.